A 488-amino-acid chain; its full sequence is Proline--tRNA ligase (488 aa).

The protein belongs to the class-II aminoacyl-tRNA synthetase family. ProS type 3 subfamily. Homodimer.

It localises to the cytoplasm. The enzyme catalyses tRNA(Pro) + L-proline + ATP = L-prolyl-tRNA(Pro) + AMP + diphosphate. Its function is as follows. Catalyzes the attachment of proline to tRNA(Pro) in a two-step reaction: proline is first activated by ATP to form Pro-AMP and then transferred to the acceptor end of tRNA(Pro). The polypeptide is Proline--tRNA ligase (Borreliella burgdorferi (strain ZS7) (Borrelia burgdorferi)).